The sequence spans 156 residues: MKIQLIAVGTKMPKWVEEGFQEYRRRFPHDMPLELVEISAGKRGKNADIARILQKEGEAMLAAVPKGNRIVTLDIPGKKWDTPQLAEQLEAWKLDGRDVSILIGGPEGLAPACKAAADQSWSLSALTLPHPLVRIVMAESLYRAWSITANHPYHRE.

Residues L73, G104, and 123-128 contribute to the S-adenosyl-L-methionine site; that span reads LSALTL.

This sequence belongs to the RNA methyltransferase RlmH family. Homodimer.

It localises to the cytoplasm. The catalysed reaction is pseudouridine(1915) in 23S rRNA + S-adenosyl-L-methionine = N(3)-methylpseudouridine(1915) in 23S rRNA + S-adenosyl-L-homocysteine + H(+). Functionally, specifically methylates the pseudouridine at position 1915 (m3Psi1915) in 23S rRNA. In Vibrio parahaemolyticus serotype O3:K6 (strain RIMD 2210633), this protein is Ribosomal RNA large subunit methyltransferase H.